The chain runs to 227 residues: Enolase-phosphatase E1 (227 aa).

Residues D12 and E14 each coordinate Mg(2+). Substrate contacts are provided by residues 118–119 and K159; that span reads SS. D186 is a Mg(2+) binding site.

The protein belongs to the HAD-like hydrolase superfamily. MasA/MtnC family. As to quaternary structure, monomer. Requires Mg(2+) as cofactor.

It is found in the cytoplasm. The protein localises to the nucleus. The enzyme catalyses 5-methylsulfanyl-2,3-dioxopentyl phosphate + H2O = 1,2-dihydroxy-5-(methylsulfanyl)pent-1-en-3-one + phosphate. The protein operates within amino-acid biosynthesis; L-methionine biosynthesis via salvage pathway; L-methionine from S-methyl-5-thio-alpha-D-ribose 1-phosphate: step 3/6. It functions in the pathway amino-acid biosynthesis; L-methionine biosynthesis via salvage pathway; L-methionine from S-methyl-5-thio-alpha-D-ribose 1-phosphate: step 4/6. In terms of biological role, bifunctional enzyme that catalyzes the enolization of 2,3-diketo-5-methylthiopentyl-1-phosphate (DK-MTP-1-P) into the intermediate 2-hydroxy-3-keto-5-methylthiopentenyl-1-phosphate (HK-MTPenyl-1-P), which is then dephosphorylated to form the acireductone 1,2-dihydroxy-3-keto-5-methylthiopentene (DHK-MTPene). This Vanderwaltozyma polyspora (strain ATCC 22028 / DSM 70294 / BCRC 21397 / CBS 2163 / NBRC 10782 / NRRL Y-8283 / UCD 57-17) (Kluyveromyces polysporus) protein is Enolase-phosphatase E1.